Consider the following 185-residue polypeptide: MIEETLLEAEEKMEKAVLVTKEDFASIRTGRPSPATFSRITVEYYGAMTPVNQLASFQVPEPRMVIISPYDKAAMPAIEKAIRESDLGVNPSNDGNIIRVVFPELSEERRKEYVKVARNKAEDGRTSVRNVRRQAKDAIDKAVKAGEIGEDEGHRAQKELDALTQKYVGEIDELLKHKESELLEV.

It belongs to the RRF family.

Its subcellular location is the cytoplasm. Its function is as follows. Responsible for the release of ribosomes from messenger RNA at the termination of protein biosynthesis. May increase the efficiency of translation by recycling ribosomes from one round of translation to another. In Thermobifida fusca (strain YX), this protein is Ribosome-recycling factor.